The chain runs to 1101 residues: Type VI secretion system component TssM1 (1101 aa).

Residues 371-391 (LTIGALSATALVVLAVTAVWI) form a helical membrane-spanning segment.

The protein localises to the cell inner membrane. Core component of the type VI (T6SS) secretion system that plays a role in the release of toxins targeting both eukaryotic and prokaryotic species. Plays an essential role in stabilization of assembled TssK1 structure at a fixed perimembrane site. This Pseudomonas aeruginosa (strain ATCC 15692 / DSM 22644 / CIP 104116 / JCM 14847 / LMG 12228 / 1C / PRS 101 / PAO1) protein is Type VI secretion system component TssM1.